The sequence spans 54 residues: ATP synthase F(0) complex subunit 8 (54 aa).

A helical membrane pass occupies residues 8–24 (PWFSIMLLTWFTFSLLI).

The protein belongs to the ATPase protein 8 family. In terms of assembly, component of the ATP synthase complex composed at least of ATP5F1A/subunit alpha, ATP5F1B/subunit beta, ATP5MC1/subunit c (homooctomer), MT-ATP6/subunit a, MT-ATP8/subunit 8, ATP5ME/subunit e, ATP5MF/subunit f, ATP5MG/subunit g, ATP5MK/subunit k, ATP5MJ/subunit j, ATP5F1C/subunit gamma, ATP5F1D/subunit delta, ATP5F1E/subunit epsilon, ATP5PF/subunit F6, ATP5PB/subunit b, ATP5PD/subunit d, ATP5PO/subunit OSCP. ATP synthase complex consists of a soluble F(1) head domain (subunits alpha(3) and beta(3)) - the catalytic core - and a membrane F(0) domain - the membrane proton channel (subunits c, a, 8, e, f, g, k and j). These two domains are linked by a central stalk (subunits gamma, delta, and epsilon) rotating inside the F1 region and a stationary peripheral stalk (subunits F6, b, d, and OSCP).

It localises to the mitochondrion membrane. Its function is as follows. Subunit 8, of the mitochondrial membrane ATP synthase complex (F(1)F(0) ATP synthase or Complex V) that produces ATP from ADP in the presence of a proton gradient across the membrane which is generated by electron transport complexes of the respiratory chain. ATP synthase complex consist of a soluble F(1) head domain - the catalytic core - and a membrane F(1) domain - the membrane proton channel. These two domains are linked by a central stalk rotating inside the F(1) region and a stationary peripheral stalk. During catalysis, ATP synthesis in the catalytic domain of F(1) is coupled via a rotary mechanism of the central stalk subunits to proton translocation. In vivo, can only synthesize ATP although its ATP hydrolase activity can be activated artificially in vitro. Part of the complex F(0) domain. This is ATP synthase F(0) complex subunit 8 from Gallus gallus (Chicken).